Reading from the N-terminus, the 352-residue chain is Holliday junction branch migration complex subunit RuvB (352 aa).

The segment at 1–181 (MTDRIVGAAK…FGIPVRLHFY (181 aa)) is large ATPase domain (RuvB-L). Residues Leu20, Arg21, Gly62, Lys65, Thr66, Thr67, 128–130 (EDF), Arg171, Tyr181, and Arg218 each bind ATP. Thr66 provides a ligand contact to Mg(2+). The small ATPAse domain (RuvB-S) stretch occupies residues 182–252 (EVAELEGIVR…AADKALQRLE (71 aa)). The head domain (RuvB-H) stretch occupies residues 255–352 (ELGLDALDHR…FDGDEENGSA (98 aa)). DNA is bound by residues Arg291, Arg310, and Arg315.

This sequence belongs to the RuvB family. In terms of assembly, homohexamer. Forms an RuvA(8)-RuvB(12)-Holliday junction (HJ) complex. HJ DNA is sandwiched between 2 RuvA tetramers; dsDNA enters through RuvA and exits via RuvB. An RuvB hexamer assembles on each DNA strand where it exits the tetramer. Each RuvB hexamer is contacted by two RuvA subunits (via domain III) on 2 adjacent RuvB subunits; this complex drives branch migration. In the full resolvosome a probable DNA-RuvA(4)-RuvB(12)-RuvC(2) complex forms which resolves the HJ.

It localises to the cytoplasm. It catalyses the reaction ATP + H2O = ADP + phosphate + H(+). Functionally, the RuvA-RuvB-RuvC complex processes Holliday junction (HJ) DNA during genetic recombination and DNA repair, while the RuvA-RuvB complex plays an important role in the rescue of blocked DNA replication forks via replication fork reversal (RFR). RuvA specifically binds to HJ cruciform DNA, conferring on it an open structure. The RuvB hexamer acts as an ATP-dependent pump, pulling dsDNA into and through the RuvAB complex. RuvB forms 2 homohexamers on either side of HJ DNA bound by 1 or 2 RuvA tetramers; 4 subunits per hexamer contact DNA at a time. Coordinated motions by a converter formed by DNA-disengaged RuvB subunits stimulates ATP hydrolysis and nucleotide exchange. Immobilization of the converter enables RuvB to convert the ATP-contained energy into a lever motion, pulling 2 nucleotides of DNA out of the RuvA tetramer per ATP hydrolyzed, thus driving DNA branch migration. The RuvB motors rotate together with the DNA substrate, which together with the progressing nucleotide cycle form the mechanistic basis for DNA recombination by continuous HJ branch migration. Branch migration allows RuvC to scan DNA until it finds its consensus sequence, where it cleaves and resolves cruciform DNA. The protein is Holliday junction branch migration complex subunit RuvB of Parvibaculum lavamentivorans (strain DS-1 / DSM 13023 / NCIMB 13966).